Here is a 345-residue protein sequence, read N- to C-terminus: Centromere protein L (345 aa).

Phosphoserine is present on residues Ser40 and Ser54.

Belongs to the CENP-L/IML3 family. In terms of assembly, component of the CENPA-CAD complex, composed of CENPI, CENPK, CENPL, CENPO, CENPP, CENPQ, CENPR and CENPS. The CENPA-CAD complex interacts with the CENPA-NAC complex, at least composed of CENPA, CENPC, CENPH, CENPM, CENPN, CENPT and CENPU.

Its subcellular location is the nucleus. It is found in the chromosome. It localises to the centromere. Its function is as follows. Component of the CENPA-CAD (nucleosome distal) complex, a complex recruited to centromeres which is involved in assembly of kinetochore proteins, mitotic progression and chromosome segregation. May be involved in incorporation of newly synthesized CENPA into centromeres via its interaction with the CENPA-NAC complex. This chain is Centromere protein L (Cenpl), found in Rattus norvegicus (Rat).